A 361-amino-acid polypeptide reads, in one-letter code: Endo-1,4-beta-xylanase 2 (361 aa).

A signal peptide spans 1-26 (MHFSTITAALALLGLGAATPTDYSTS). One can recognise a GH10 domain in the interval 46-354 (IGTALTIRDD…KPAYSSVLKT (309 aa)). N-linked (GlcNAc...) asparagine glycans are attached at residues Asn-88 and Asn-130. Glu-160 acts as the Proton donor in catalysis. The Nucleophile role is filled by Glu-276. A disulfide bridge links Cys-304 with Cys-310.

Belongs to the glycosyl hydrolase 10 (cellulase F) family.

Its subcellular location is the secreted. It carries out the reaction Endohydrolysis of (1-&gt;4)-beta-D-xylosidic linkages in xylans.. Its pathway is glycan degradation; xylan degradation. Functionally, endo-1,4-beta-xylanase involved in the hydrolysis of xylan, a major structural heterogeneous polysaccharide found in plant biomass representing the second most abundant polysaccharide in the biosphere, after cellulose. Hydrolyzes birch-wood xylan, with a similar activity toward oat-spelt xylan. Also shows weak activities toward pNP-beta-D-cellobioside and pNP-beta-D-xylopyranoside, but no detectable activity toward carboxymethyl cellulose and pNP-beta-L-arabinofuranoside.-. This Aureobasidium pullulans (Black yeast) protein is Endo-1,4-beta-xylanase 2 (xynII).